We begin with the raw amino-acid sequence, 119 residues long: MNTEKLETLLGFYKQYKALSEYIDKKYKLSLNDLAVLDLTMKHCKDEKVLMQSFLKTAMDELDLSRTKLLVSIRRLIEKERLSKVRSSKDERKIYIYLNDDDISKFNALFEDVEQFLNI.

Positions 55–78 (LKTAMDELDLSRTKLLVSIRRLIE) form a DNA-binding region, H-T-H motif.

Belongs to the SarA family.

It localises to the cytoplasm. In terms of biological role, involved in the regulation of virulence genes. Acts as a repressor of the agr locus and consequently targets genes regulated by the agr system such as sspA, hla and hlb. Binds directly to the agr promoter region. The polypeptide is HTH-type transcriptional regulator SarX (sarX) (Staphylococcus aureus (strain bovine RF122 / ET3-1)).